We begin with the raw amino-acid sequence, 79 residues long: Conotoxin Tr6.3 (79 aa).

Positions 1–22 (MKLTCVLIISVLFLTASQLITA) are cleaved as a signal peptide. Positions 23 to 47 (VYSRDKQQYRAARLRDEMRNLKGAR) are excised as a propeptide. Intrachain disulfides connect C49–C62, C56–C67, and C61–C77. P60 and P63 each carry 4-hydroxyproline.

Belongs to the conotoxin O1 superfamily. Expressed by the venom duct.

The protein localises to the secreted. Ion channel inhibitor that inhibits the increase in intracellular calcium upon depolarization in DRG neurons. In vivo, both intraperitoneal and intracranial injections into mice induce hyperactivity. The protein is Conotoxin Tr6.3 of Conus terebra (Sea snail).